The sequence spans 152 residues: MPLKFGLIVATAALIASAASLMAADHQVQMLNKGTDGAMVFEPGFLKIAPGDTVTFIPTDKSHNVETFKGLIPDGVPDFKSKPNEQYQVKFDIPGAYVLKCTPHVGMGMVALIQVGDNPANLEPIKIAKVPNMVRKRLDADLAQITPAQITQ.

Positions 1–23 are cleaved as a signal peptide; it reads MPLKFGLIVATAALIASAASLMA. The Plastocyanin-like domain maps to 28–116; the sequence is VQMLNKGTDG…MGMVALIQVG (89 aa). 4 residues coordinate Cu cation: His-63, Cys-101, His-104, and Met-109.

The cofactor is Cu cation.

It localises to the periplasm. Its function is as follows. This soluble electron transfer copper protein is required for the inactivation of copper-containing nitrite reductase in the presence of oxygen. The chain is Putative pseudoazurin (azu) from Rhizobium leguminosarum bv. viciae.